The primary structure comprises 360 residues: tRNA (guanine(37)-N(1))-methyltransferase (360 aa).

S-adenosyl-L-methionine is bound by residues arginine 197, 235 to 236, and asparagine 283; that span reads DL.

The protein belongs to the class I-like SAM-binding methyltransferase superfamily. TRM5/TYW2 family. In terms of assembly, monomer.

It localises to the mitochondrion matrix. The protein resides in the nucleus. It is found in the cytoplasm. The catalysed reaction is guanosine(37) in tRNA + S-adenosyl-L-methionine = N(1)-methylguanosine(37) in tRNA + S-adenosyl-L-homocysteine + H(+). In terms of biological role, specifically methylates the N1 position of guanosine-37 in various cytoplasmic and mitochondrial tRNAs. Methylation is not dependent on the nature of the nucleoside 5' of the target nucleoside. This is the first step in the biosynthesis of wybutosine (yW), a modified base adjacent to the anticodon of tRNAs and required for accurate decoding. This is tRNA (guanine(37)-N(1))-methyltransferase from Encephalitozoon cuniculi (strain GB-M1) (Microsporidian parasite).